The chain runs to 243 residues: Cell division protein ZipA (243 aa).

Over Met-1–Met-4 the chain is Periplasmic. A helical membrane pass occupies residues Ala-5–Phe-25. Over Gly-26–Trp-243 the chain is Cytoplasmic. The tract at residues Lys-30–Lys-89 is disordered. Basic and acidic residues predominate over residues Arg-35–Pro-50.

The protein belongs to the ZipA family. As to quaternary structure, interacts with FtsZ via their C-terminal domains.

The protein resides in the cell inner membrane. Functionally, essential cell division protein that stabilizes the FtsZ protofilaments by cross-linking them and that serves as a cytoplasmic membrane anchor for the Z ring. Also required for the recruitment to the septal ring of downstream cell division proteins. The sequence is that of Cell division protein ZipA from Xanthomonas euvesicatoria pv. vesicatoria (strain 85-10) (Xanthomonas campestris pv. vesicatoria).